The sequence spans 669 residues: DNA ligase (669 aa).

NAD(+) contacts are provided by residues 32–36 (DAEYD), 81–82 (SL), and glutamate 111. The N6-AMP-lysine intermediate role is filled by lysine 113. 4 residues coordinate NAD(+): arginine 134, glutamate 171, lysine 290, and lysine 314. Zn(2+) is bound by residues cysteine 408, cysteine 411, cysteine 426, and cysteine 432. A BRCT domain is found at 591–669 (EEALSLKGQT…EAELLAILGS (79 aa)).

It belongs to the NAD-dependent DNA ligase family. LigA subfamily. Mg(2+) serves as cofactor. Requires Mn(2+) as cofactor.

It catalyses the reaction NAD(+) + (deoxyribonucleotide)n-3'-hydroxyl + 5'-phospho-(deoxyribonucleotide)m = (deoxyribonucleotide)n+m + AMP + beta-nicotinamide D-nucleotide.. In terms of biological role, DNA ligase that catalyzes the formation of phosphodiester linkages between 5'-phosphoryl and 3'-hydroxyl groups in double-stranded DNA using NAD as a coenzyme and as the energy source for the reaction. It is essential for DNA replication and repair of damaged DNA. The chain is DNA ligase from Shewanella loihica (strain ATCC BAA-1088 / PV-4).